The chain runs to 678 residues: Protein CASP (678 aa).

The Cytoplasmic portion of the chain corresponds to 1–619 (MAANVGSMFQ…LVLSNKMART (619 aa)). 2 coiled-coil regions span residues 67-450 (LLKS…QDLS) and 502-556 (LSII…FLQS). Residue Ser586 is modified to Phosphoserine. A helical; Anchor for type IV membrane protein transmembrane segment spans residues 620 to 640 (IGFFYTLFLHCLVFLVLYKLA). Residues 641-678 (WSESMERDCATFCAKKFADHLHKFHENDNGAAAGDLWQ) are Lumenal-facing.

It belongs to the CASP family. Homodimer; disulfide-linked. Interacts with GOLGA5.

The protein localises to the golgi apparatus membrane. May be involved in intra-Golgi retrograde transport. In Pongo abelii (Sumatran orangutan), this protein is Protein CASP (CUTL1).